The following is a 123-amino-acid chain: Large ribosomal subunit protein bL12 (123 aa).

Belongs to the bacterial ribosomal protein bL12 family. Homodimer. Part of the ribosomal stalk of the 50S ribosomal subunit. Forms a multimeric L10(L12)X complex, where L10 forms an elongated spine to which 2 to 4 L12 dimers bind in a sequential fashion. Binds GTP-bound translation factors.

Functionally, forms part of the ribosomal stalk which helps the ribosome interact with GTP-bound translation factors. Is thus essential for accurate translation. This is Large ribosomal subunit protein bL12 from Shewanella sp. (strain MR-4).